Consider the following 874-residue polypeptide: Alanine--tRNA ligase (874 aa).

Positions 561, 565, 663, and 667 each coordinate Zn(2+).

It belongs to the class-II aminoacyl-tRNA synthetase family. Zn(2+) is required as a cofactor.

Its subcellular location is the cytoplasm. It catalyses the reaction tRNA(Ala) + L-alanine + ATP = L-alanyl-tRNA(Ala) + AMP + diphosphate. Catalyzes the attachment of alanine to tRNA(Ala) in a two-step reaction: alanine is first activated by ATP to form Ala-AMP and then transferred to the acceptor end of tRNA(Ala). Also edits incorrectly charged Ser-tRNA(Ala) and Gly-tRNA(Ala) via its editing domain. The sequence is that of Alanine--tRNA ligase from Trichodesmium erythraeum (strain IMS101).